Reading from the N-terminus, the 173-residue chain is Large ribosomal subunit protein uL16 (173 aa).

Belongs to the universal ribosomal protein uL16 family.

The protein is Large ribosomal subunit protein uL16 of Methanosarcina mazei (strain ATCC BAA-159 / DSM 3647 / Goe1 / Go1 / JCM 11833 / OCM 88) (Methanosarcina frisia).